The primary structure comprises 217 residues: Protein-L-isoaspartate O-methyltransferase (217 aa).

Residue serine 61 is part of the active site.

Belongs to the methyltransferase superfamily. L-isoaspartyl/D-aspartyl protein methyltransferase family.

Its subcellular location is the cytoplasm. It carries out the reaction [protein]-L-isoaspartate + S-adenosyl-L-methionine = [protein]-L-isoaspartate alpha-methyl ester + S-adenosyl-L-homocysteine. In terms of biological role, catalyzes the methyl esterification of L-isoaspartyl residues in peptides and proteins that result from spontaneous decomposition of normal L-aspartyl and L-asparaginyl residues. It plays a role in the repair and/or degradation of damaged proteins. The sequence is that of Protein-L-isoaspartate O-methyltransferase from Brucella anthropi (strain ATCC 49188 / DSM 6882 / CCUG 24695 / JCM 21032 / LMG 3331 / NBRC 15819 / NCTC 12168 / Alc 37) (Ochrobactrum anthropi).